Consider the following 346-residue polypeptide: Hexosaminidase D (346 aa).

The active-site Proton donor is Glu-141.

The protein belongs to the glycosyl hydrolase 20 family. In terms of assembly, homodimer; disulfide-linked.

The protein resides in the cytoplasm. It localises to the nucleus. Its subcellular location is the extracellular vesicle. The enzyme catalyses Hydrolysis of terminal non-reducing N-acetyl-D-hexosamine residues in N-acetyl-beta-D-hexosaminides.. Inhibited by O-(2-acetamido-2-deoxy-D-glucopyranosylidene)amino N-phenylcarbamate (PUGNAc). Inhibited by galacto-NAG-thiazoline. Has hexosaminidase activity. Responsible for the cleavage of the monosaccharides N-acetylglucosamine (GlcNAc) and N-acetylgalactosamine (GalNAc) from cellular substrates. Has a preference for galactosaminide over glucosaminide substrates. This chain is Hexosaminidase D, found in Bos taurus (Bovine).